The sequence spans 273 residues: Large ribosomal subunit protein uL2 (273 aa).

Disordered regions lie at residues 28–53 and 221–273; these read KPFA…TTRH and RGTA…RRSK. Positions 39-48 are enriched in low complexity; that stretch reads KSGGRNNNGR. Residue lysine 242 is modified to N6-acetyllysine.

It belongs to the universal ribosomal protein uL2 family. Part of the 50S ribosomal subunit. Forms a bridge to the 30S subunit in the 70S ribosome.

Its function is as follows. One of the primary rRNA binding proteins. Required for association of the 30S and 50S subunits to form the 70S ribosome, for tRNA binding and peptide bond formation. It has been suggested to have peptidyltransferase activity; this is somewhat controversial. Makes several contacts with the 16S rRNA in the 70S ribosome. The sequence is that of Large ribosomal subunit protein uL2 from Escherichia coli (strain SE11).